Here is a 336-residue protein sequence, read N- to C-terminus: DNA-directed RNA polymerase subunit alpha (336 aa).

The interval 1-232 (MIQKNWQELI…DQLSVFVNFD (232 aa)) is alpha N-terminal domain (alpha-NTD). The interval 248–336 (FNPALLKKVD…DLAKRYEDQY (89 aa)) is alpha C-terminal domain (alpha-CTD).

This sequence belongs to the RNA polymerase alpha chain family. In terms of assembly, homodimer. The RNAP catalytic core consists of 2 alpha, 1 beta, 1 beta' and 1 omega subunit. When a sigma factor is associated with the core the holoenzyme is formed, which can initiate transcription.

The enzyme catalyses RNA(n) + a ribonucleoside 5'-triphosphate = RNA(n+1) + diphosphate. In terms of biological role, DNA-dependent RNA polymerase catalyzes the transcription of DNA into RNA using the four ribonucleoside triphosphates as substrates. In Sinorhizobium medicae (strain WSM419) (Ensifer medicae), this protein is DNA-directed RNA polymerase subunit alpha.